The following is a 256-amino-acid chain: tRNA pseudouridine synthase A (256 aa).

Aspartate 55 acts as the Nucleophile in catalysis. Tyrosine 113 is a binding site for substrate.

It belongs to the tRNA pseudouridine synthase TruA family. Homodimer.

It catalyses the reaction uridine(38/39/40) in tRNA = pseudouridine(38/39/40) in tRNA. Formation of pseudouridine at positions 38, 39 and 40 in the anticodon stem and loop of transfer RNAs. This is tRNA pseudouridine synthase A from Limosilactobacillus reuteri (strain DSM 20016) (Lactobacillus reuteri).